The primary structure comprises 289 residues: 33 kDa chaperonin (289 aa).

2 disulfides stabilise this stretch: Cys229-Cys231 and Cys262-Cys265.

The protein belongs to the HSP33 family. Post-translationally, under oxidizing conditions two disulfide bonds are formed involving the reactive cysteines. Under reducing conditions zinc is bound to the reactive cysteines and the protein is inactive.

Its subcellular location is the cytoplasm. Redox regulated molecular chaperone. Protects both thermally unfolding and oxidatively damaged proteins from irreversible aggregation. Plays an important role in the bacterial defense system toward oxidative stress. The polypeptide is 33 kDa chaperonin (Pectobacterium atrosepticum (strain SCRI 1043 / ATCC BAA-672) (Erwinia carotovora subsp. atroseptica)).